A 110-amino-acid polypeptide reads, in one-letter code: U1-lycotoxin-Ls1bb (110 aa).

The first 20 residues, 1–20 (MKFVLLFGVLLVTLFSYSSA), serve as a signal peptide directing secretion. Residues 21 to 44 (EMLDDFDQADEDELLSLIEKEEAR) constitute a propeptide that is removed on maturation. Intrachain disulfides connect C47/C62, C54/C71, C61/C89, and C73/C87.

It belongs to the neurotoxin 19 (CSTX) family. 03 subfamily. As to expression, expressed by the venom gland.

The protein localises to the secreted. This chain is U1-lycotoxin-Ls1bb, found in Lycosa singoriensis (Wolf spider).